A 308-amino-acid chain; its full sequence is Olfactory receptor 5H8 (308 aa).

Over 1–28 the chain is Extracellular; the sequence is MDDENATLLTEFVLTGLTYQSEWKIPLF. The chain crosses the membrane as a helical span at residues 29-49; that stretch reads LAFLVIYLITIMANLGLIAVI. The Cytoplasmic portion of the chain corresponds to 50–56; it reads WKDSHLH. A helical membrane pass occupies residues 57–77; the sequence is IPMYLFLGSLAFVDAWLSSSV. Topologically, residues 78–98 are extracellular; that stretch reads TPKMLISFLAKSMIISVSECK. An intrachain disulfide couples cysteine 97 to cysteine 179. The helical transmembrane segment at 99 to 119 threads the bilayer; it reads IQFFSFGISGTTECFLLATMA. Residues 120-133 lie on the Cytoplasmic side of the membrane; it reads YDRYVAICKPLLYP. Residues 134–154 traverse the membrane as a helical segment; that stretch reads VIMTNGLCIWLLVLSFIGGFL. Residues 155–195 lie on the Extracellular side of the membrane; sequence HALIHEGILFRLTFCNSNIIHHFYCDIIPLLKISCTDPSIN. A helical transmembrane segment spans residues 196 to 216; the sequence is FLMLFILSGSIQVFTILTVLV. Topologically, residues 217-238 are cytoplasmic; the sequence is SYTFVLFTILKKKAKDIRKAFS. Residues 239–259 traverse the membrane as a helical segment; that stretch reads TCGAHLLSVSLYYGPLLFMYV. At 260–270 the chain is on the extracellular side; it reads HPASPQADDQD. A helical membrane pass occupies residues 271 to 291; the sequence is MVESLFYTVIIPFLNPIIYSL. The Cytoplasmic portion of the chain corresponds to 292-308; it reads RNKQVIDSLTKTLKGNV.

It belongs to the G-protein coupled receptor 1 family.

The protein resides in the cell membrane. Functionally, odorant receptor. The polypeptide is Olfactory receptor 5H8 (Homo sapiens (Human)).